The chain runs to 199 residues: Chromophore lyase CpcT/CpeT (199 aa).

The protein belongs to the CpcT/CpeT biliprotein lyase family.

Functionally, covalently attaches a chromophore to Cys residue(s) of phycobiliproteins. The protein is Chromophore lyase CpcT/CpeT of Prochlorococcus marinus (strain NATL1A).